Consider the following 635-residue polypeptide: 1-deoxy-D-xylulose-5-phosphate synthase (635 aa).

Thiamine diphosphate-binding positions include histidine 74 and 115–117 (GHA). Residue aspartate 146 participates in Mg(2+) binding. Thiamine diphosphate-binding positions include 147 to 148 (GA), asparagine 175, tyrosine 285, and glutamate 367. Residue asparagine 175 participates in Mg(2+) binding.

The protein belongs to the transketolase family. DXPS subfamily. As to quaternary structure, homodimer. It depends on Mg(2+) as a cofactor. Thiamine diphosphate serves as cofactor.

The catalysed reaction is D-glyceraldehyde 3-phosphate + pyruvate + H(+) = 1-deoxy-D-xylulose 5-phosphate + CO2. It functions in the pathway metabolic intermediate biosynthesis; 1-deoxy-D-xylulose 5-phosphate biosynthesis; 1-deoxy-D-xylulose 5-phosphate from D-glyceraldehyde 3-phosphate and pyruvate: step 1/1. Its function is as follows. Catalyzes the acyloin condensation reaction between C atoms 2 and 3 of pyruvate and glyceraldehyde 3-phosphate to yield 1-deoxy-D-xylulose-5-phosphate (DXP). The protein is 1-deoxy-D-xylulose-5-phosphate synthase of Anaeromyxobacter sp. (strain Fw109-5).